The chain runs to 303 residues: Mesenteric estrogen-dependent adipogenesis protein (303 aa).

It is found in the cytoplasm. Involved in processes that promote adipocyte differentiation, lipid accumulation, and glucose uptake in mature adipocytes. In Bos taurus (Bovine), this protein is Mesenteric estrogen-dependent adipogenesis protein (MEDAG).